Consider the following 73-residue polypeptide: Toxin Td12 (73 aa).

Residues 1–7 (IGMVIEC) form the signal peptide. In terms of domain architecture, LCN-type CS-alpha/beta spans 8–70 (KDGYLMEPNG…TWDRATNTCG (63 aa)). 4 disulfide bridges follow: Cys-18/Cys-69, Cys-22/Cys-44, Cys-30/Cys-50, and Cys-34/Cys-52. Arginine amide is present on Arg-71.

It belongs to the long (4 C-C) scorpion toxin superfamily. Sodium channel inhibitor family. Beta subfamily. Expressed by the venom gland.

It localises to the secreted. Beta toxins bind voltage-independently at site-4 of sodium channels (Nav) and shift the voltage of activation toward more negative potentials thereby affecting sodium channel activation and promoting spontaneous and repetitive firing. This Tityus discrepans (Venezuelan scorpion) protein is Toxin Td12.